The sequence spans 692 residues: Elongation factor G (692 aa).

The 275-residue stretch at 8–282 folds into the tr-type G domain; the sequence is KDTRNIGIMA…AVLDYLPSPL (275 aa). Residues 17-24, 81-85, and 135-138 each bind GTP; these read AHIDAGKT, DTPGH, and NKMD.

It belongs to the TRAFAC class translation factor GTPase superfamily. Classic translation factor GTPase family. EF-G/EF-2 subfamily.

The protein localises to the cytoplasm. In terms of biological role, catalyzes the GTP-dependent ribosomal translocation step during translation elongation. During this step, the ribosome changes from the pre-translocational (PRE) to the post-translocational (POST) state as the newly formed A-site-bound peptidyl-tRNA and P-site-bound deacylated tRNA move to the P and E sites, respectively. Catalyzes the coordinated movement of the two tRNA molecules, the mRNA and conformational changes in the ribosome. The chain is Elongation factor G from Shouchella clausii (strain KSM-K16) (Alkalihalobacillus clausii).